Reading from the N-terminus, the 353-residue chain is Photosystem II D2 protein (353 aa).

Position 2 is an N-acetylthreonine (threonine 2). A Phosphothreonine modification is found at threonine 2. A helical membrane pass occupies residues 41–61 (CAYFALGGWFTGTTFVTSWYT). Histidine 118 provides a ligand contact to chlorophyll a. Residues 125 to 141 (GFMLRQFELARSVQLRP) traverse the membrane as a helical segment. Pheophytin a contacts are provided by glutamine 130 and asparagine 143. The helical transmembrane segment at 153 to 166 (VFVSVFLIYPLGQS) threads the bilayer. Histidine 198 provides a ligand contact to chlorophyll a. A helical transmembrane segment spans residues 208–228 (AALLCAIHGATVENLYFEDGD). 2 residues coordinate a plastoquinone: histidine 215 and phenylalanine 262. Position 215 (histidine 215) interacts with Fe cation. Histidine 269 lines the Fe cation pocket. Residues 279–295 (GLWMSALGVVGLALNLR) traverse the membrane as a helical segment.

This sequence belongs to the reaction center PufL/M/PsbA/D family. PSII is composed of 1 copy each of membrane proteins PsbA, PsbB, PsbC, PsbD, PsbE, PsbF, PsbH, PsbI, PsbJ, PsbK, PsbL, PsbM, PsbT, PsbX, PsbY, PsbZ, Psb30/Ycf12, at least 3 peripheral proteins of the oxygen-evolving complex and a large number of cofactors. It forms dimeric complexes. The D1/D2 heterodimer binds P680, chlorophylls that are the primary electron donor of PSII, and subsequent electron acceptors. It shares a non-heme iron and each subunit binds pheophytin, quinone, additional chlorophylls, carotenoids and lipids. There is also a Cl(-1) ion associated with D1 and D2, which is required for oxygen evolution. The PSII complex binds additional chlorophylls, carotenoids and specific lipids. serves as cofactor.

The protein localises to the plastid. It localises to the chloroplast thylakoid membrane. The catalysed reaction is 2 a plastoquinone + 4 hnu + 2 H2O = 2 a plastoquinol + O2. Functionally, photosystem II (PSII) is a light-driven water:plastoquinone oxidoreductase that uses light energy to abstract electrons from H(2)O, generating O(2) and a proton gradient subsequently used for ATP formation. It consists of a core antenna complex that captures photons, and an electron transfer chain that converts photonic excitation into a charge separation. The D1/D2 (PsbA/PsbD) reaction center heterodimer binds P680, the primary electron donor of PSII as well as several subsequent electron acceptors. D2 is needed for assembly of a stable PSII complex. This Panax ginseng (Korean ginseng) protein is Photosystem II D2 protein.